The following is a 518-amino-acid chain: Triacylglycerol lipase OBL1 (518 aa).

A helical transmembrane segment spans residues 93-113; that stretch reads GFVVDFFLNLFSANGGFFGLL. A GXSXG motif is present at residues 337-341; that stretch reads GHSLG. S339 (nucleophile) is an active-site residue. Catalysis depends on charge relay system residues D403 and H496.

It belongs to the AB hydrolase superfamily. Lipase family. As to expression, expressed in pollen grains, pollen tubes, developing embryos, developing seeds and germinating seeds.

Its subcellular location is the lipid droplet. It localises to the membrane. It catalyses the reaction 1,2-di-(9Z-octadecenoyl)-glycerol + (9Z)-octadecenoate + H(+) = 1,2,3-tri-(9Z-octadecenoyl)-glycerol + H2O. The catalysed reaction is 1-(9Z-octadecenoyl)-glycerol + H2O = glycerol + (9Z)-octadecenoate + H(+). In terms of biological role, acid lipase that can hydrolyze a range of triacylglycerols without a clear preference for acyl-chains. Can also cleave 1,2-diacylglycerol, 1,3-diacylglycerol and 1-monoacylglycerol, but not phosphatidylcholine, phosphatidylethanolamine, or sterol esters. Required for pollen tube growth. Triacylglycerol hydrolysis by OBL1 may provide acyl groups for the synthesis of membrane lipids in growing pollen tubes. The protein is Triacylglycerol lipase OBL1 of Arabidopsis thaliana (Mouse-ear cress).